Here is a 111-residue protein sequence, read N- to C-terminus: MEERIRLSILLDIYGELLTEKQRNVLDLYYNQDLSLAEIAEHTSTSRQAVYDIIKRCHMLLVHYEDKLNLMEEKKNIEENKKGIIDFIDSLYSDKNAEVLDKIKNYIMNNI.

The protein belongs to the UPF0122 family.

In terms of biological role, might take part in the signal recognition particle (SRP) pathway. This is inferred from the conservation of its genetic proximity to ftsY/ffh. May be a regulatory protein. This chain is UPF0122 protein CKR_1296, found in Clostridium kluyveri (strain NBRC 12016).